The chain runs to 733 residues: Leucine-rich repeat neuronal protein 4 (733 aa).

The N-terminal stretch at 1 to 19 is a signal peptide; the sequence is MRWTLMLQLLQLLLQLLMA. At 20 to 676 the chain is on the extracellular side; that stretch reads QSQSLERISQ…CATFTTKPSS (657 aa). 10 LRR repeats span residues 62–82, 83–106, 107–128, 130–151, 154–175, 178–199, 207–230, 231–253, 256–278, and 281–302; these read GVTTLNLANRSLESLPSCLPR, TLRSLDGSHNLLRALSEPVLGRLP, ELRVLTLHHNRISVLHWGRDTL, ELRELDLSHNLLTELPPCAGPS, SLRSLALAGNPLRALLPRTFAC, ALRLLNLSCSELGHIAQEAFAG, ALELLDLSGTSLERVESGWIRNLP, KLKSLFLRKMPRLKTLEGDIFKM, NLRQLDCGDSPALTSVHTEIFQD, and NLQVLQFQNCNLSSFGPWNSSQ. The N-linked (GlcNAc...) asparagine glycan is linked to N70. N-linked (GlcNAc...) asparagine glycosylation occurs at N183. N-linked (GlcNAc...) asparagine glycosylation is found at N291, N299, N327, N408, and N469. Residues 311 to 364 form the LRRCT domain; the sequence is NPLICSCELAWLLVDVNKTVLHRAADTMCEPALGSTGPFSGPLSLSHLSNVCRS. Positions 395-423 are disordered; it reads STALSAQPGGSQQNITKVPSLTMTSPTQG. Positions 480–518 are disordered; it reads KYLEPLPTSPNPRSLPQTKQRTQATPRALHTDPPQDEIP. Residues 490 to 504 show a composition bias toward polar residues; the sequence is NPRSLPQTKQRTQAT. The region spanning 576–675 is the Fibronectin type-III domain; sequence TPDPPTLQGV…SCATFTTKPS (100 aa). A glycan (N-linked (GlcNAc...) asparagine) is linked at N619. Residues 677–697 traverse the membrane as a helical segment; that stretch reads VVIFWGLCTASGLLLVSTLVL. Over 698–733 the chain is Cytoplasmic; that stretch reads SVCLWRQRWKPHRQFYDTHLVAFKNPARAEEVTQWE.

The protein resides in the membrane. In terms of biological role, may play an important role in hippocampus-dependent long-lasting memory. The polypeptide is Leucine-rich repeat neuronal protein 4 (Lrrn4) (Mus musculus (Mouse)).